Consider the following 124-residue polypeptide: Small ribosomal subunit protein uS13 (124 aa).

The segment at 95–124 is disordered; the sequence is GLPVRGQRTKTNARTRKGPKRTIAGKKKAR.

It belongs to the universal ribosomal protein uS13 family. Part of the 30S ribosomal subunit. Forms a loose heterodimer with protein S19. Forms two bridges to the 50S subunit in the 70S ribosome.

Its function is as follows. Located at the top of the head of the 30S subunit, it contacts several helices of the 16S rRNA. In the 70S ribosome it contacts the 23S rRNA (bridge B1a) and protein L5 of the 50S subunit (bridge B1b), connecting the 2 subunits; these bridges are implicated in subunit movement. Contacts the tRNAs in the A and P-sites. The protein is Small ribosomal subunit protein uS13 of Mycobacterium sp. (strain JLS).